Reading from the N-terminus, the 122-residue chain is Large ribosomal subunit protein uL14c (122 aa).

Belongs to the universal ribosomal protein uL14 family. In terms of assembly, part of the 50S ribosomal subunit.

The protein resides in the plastid. It localises to the chloroplast. Its function is as follows. Binds to 23S rRNA. The polypeptide is Large ribosomal subunit protein uL14c (Vitis vinifera (Grape)).